A 200-amino-acid chain; its full sequence is RNA polymerase I-specific transcription initiation factor rrn11 (200 aa).

Its subcellular location is the nucleus. Its function is as follows. Subunit of a multiprotein complex essential for the initiation of rDNA transcription by RNA polymerase I. Binding to the DNA template is dependent on the initial binding of other factors. The protein is RNA polymerase I-specific transcription initiation factor rrn11 (rrn11) of Schizosaccharomyces pombe (strain 972 / ATCC 24843) (Fission yeast).